The following is a 415-amino-acid chain: WD repeat-containing protein JIP5 (415 aa).

WD repeat units follow at residues aspartate 5 to alanine 44, alanine 104 to glutamate 142, glutamine 145 to phenylalanine 184, aspartate 189 to valine 228, and glycine 233 to aspartate 282. The disordered stretch occupies residues glycine 328–leucine 415. Positions glutamate 337–aspartate 346 are enriched in acidic residues. Residues aspartate 358 to glutamate 367 show a composition bias toward low complexity. Basic and acidic residues predominate over residues glutamate 390 to isoleucine 405.

This sequence belongs to the WD repeat WDR55 family.

It is found in the nucleus. It localises to the nucleolus. The protein is WD repeat-containing protein JIP5 (JIP5) of Laccaria bicolor (strain S238N-H82 / ATCC MYA-4686) (Bicoloured deceiver).